The sequence spans 418 residues: Acyl-coenzyme A amino acid N-acyltransferase 2 (418 aa).

Catalysis depends on charge relay system residues Ser234, Asp327, and His361. Positions 416–418 (GKL) match the Microbody targeting signal motif.

It belongs to the C/M/P thioester hydrolase family.

The protein resides in the peroxisome. Its function is as follows. Acyltransferase which efficiently conjugates very long-chain and long-chain fatty acids to taurine. Shows no conjugation activity in the presence of glycine. The chain is Acyl-coenzyme A amino acid N-acyltransferase 2 from Rattus norvegicus (Rat).